The following is a 201-amino-acid chain: MIEALQDLGHQIEAKRPECVLSWDIAHGELNIDVKPANIAGLVEFLRVDSACRFSTLVDITAVDYPERTKRFDVVYHLLSMYQNQRIRLRAAVREEDMVPSIVDVHPSANWFEREVFDMFGILFTGHPDLRRLLTDYGFRGHPLRKDFPTTGYTEVRYDEAQKRVVYEPVKLVQEYRQFDFMSPWEGAEYILPGDEKEIAK.

It belongs to the complex I 30 kDa subunit family. In terms of assembly, NDH-1 is composed of 14 different subunits. Subunits NuoB, C, D, E, F, and G constitute the peripheral sector of the complex.

Its subcellular location is the cell inner membrane. The catalysed reaction is a quinone + NADH + 5 H(+)(in) = a quinol + NAD(+) + 4 H(+)(out). In terms of biological role, NDH-1 shuttles electrons from NADH, via FMN and iron-sulfur (Fe-S) centers, to quinones in the respiratory chain. The immediate electron acceptor for the enzyme in this species is believed to be ubiquinone. Couples the redox reaction to proton translocation (for every two electrons transferred, four hydrogen ions are translocated across the cytoplasmic membrane), and thus conserves the redox energy in a proton gradient. The protein is NADH-quinone oxidoreductase subunit C of Ruegeria sp. (strain TM1040) (Silicibacter sp.).